We begin with the raw amino-acid sequence, 366 residues long: Transcription initiation factor IIA subunit 1 (366 aa).

Disordered stretches follow at residues 56–82 (LSPD…AANA), 133–162 (EVNS…SSGQ), and 257–317 (QLDG…DSAE). The segment covering 146 to 162 (SAASMMQKQQQAASSGQ) has biased composition (low complexity). Residues 264–317 (SSDEDESEESDDNIDNDDDDDLDKDDDEDAEHEDAAEEEPLNSEDDVTDEDSAE) show a composition bias toward acidic residues. Residues Ser265 and Ser306 each carry the phosphoserine; by TAF1 modification.

This sequence belongs to the TFIIA subunit 1 family. As to quaternary structure, belongs to the TFIID complex which is composed of TATA binding protein (Tbp) and a number of TBP-associated factors (Tafs). TFIIA is a heterodimer of a unprocessed large subunit 1 and a small subunit gamma. It was originally believed to be a heterotrimer of an alpha (p30), a beta (p20) and a gamma subunit (p14). Interacts with Tbp. Taf4 interacts with TFIIA-L when TFIIA-L is in complex with Tbp. The precursor form (48 kDa) is cleaved to give rise to the alpha (30 kDa) and beta (20 kDa) subunits.

Its subcellular location is the nucleus. In terms of biological role, TFIIA is a component of the transcription machinery of RNA polymerase II and plays an important role in transcriptional activation. TFIIA in a complex with TBP mediates transcriptional activity. The chain is Transcription initiation factor IIA subunit 1 (TfIIA-L) from Drosophila melanogaster (Fruit fly).